Reading from the N-terminus, the 356-residue chain is NADH-quinone oxidoreductase subunit H (356 aa).

9 consecutive transmembrane segments (helical) span residues 16–36 (IAVLQILAFAVVLLISLAFLL), 52–72 (PNVVGAFGLLQSFADFFKFVF), 85–105 (LYLLAPLITLILAFVTWAVVP), 117–137 (VGILYLFAMSSLGVYGIIIGG), 163–183 (IGFIIVTVLLFAGSMNLSEII), 201–221 (WPMPMFLVMIPMAVIFFISAL), 254–274 (FMVGEYLNIVLMCAMTAILFF), 295–315 (AWYFFWFAAKIVFFFFMFAMV), and 334–354 (IFLPISLAAVALVGAAVVYGP).

It belongs to the complex I subunit 1 family. NDH-1 is composed of 14 different subunits. Subunits NuoA, H, J, K, L, M, N constitute the membrane sector of the complex.

The protein localises to the cell inner membrane. It catalyses the reaction a quinone + NADH + 5 H(+)(in) = a quinol + NAD(+) + 4 H(+)(out). Functionally, NDH-1 shuttles electrons from NADH, via FMN and iron-sulfur (Fe-S) centers, to quinones in the respiratory chain. The immediate electron acceptor for the enzyme in this species is believed to be ubiquinone. Couples the redox reaction to proton translocation (for every two electrons transferred, four hydrogen ions are translocated across the cytoplasmic membrane), and thus conserves the redox energy in a proton gradient. This subunit may bind ubiquinone. This is NADH-quinone oxidoreductase subunit H from Maricaulis maris (strain MCS10) (Caulobacter maris).